The sequence spans 59 residues: UPF0434 protein PMI0721 (59 aa).

Belongs to the UPF0434 family.

The polypeptide is UPF0434 protein PMI0721 (Proteus mirabilis (strain HI4320)).